Consider the following 190-residue polypeptide: Threonylcarbamoyl-AMP synthase (190 aa).

A YrdC-like domain is found at S7 to G190.

The protein belongs to the SUA5 family. TsaC subfamily.

Its subcellular location is the cytoplasm. The catalysed reaction is L-threonine + hydrogencarbonate + ATP = L-threonylcarbamoyladenylate + diphosphate + H2O. Its function is as follows. Required for the formation of a threonylcarbamoyl group on adenosine at position 37 (t(6)A37) in tRNAs that read codons beginning with adenine. Catalyzes the conversion of L-threonine, HCO(3)(-)/CO(2) and ATP to give threonylcarbamoyl-AMP (TC-AMP) as the acyladenylate intermediate, with the release of diphosphate. The sequence is that of Threonylcarbamoyl-AMP synthase from Sodalis glossinidius (strain morsitans).